Reading from the N-terminus, the 462-residue chain is Proline--tRNA ligase (462 aa).

It belongs to the class-II aminoacyl-tRNA synthetase family. ProS type 3 subfamily. Homodimer.

The protein localises to the cytoplasm. The catalysed reaction is tRNA(Pro) + L-proline + ATP = L-prolyl-tRNA(Pro) + AMP + diphosphate. Its function is as follows. Catalyzes the attachment of proline to tRNA(Pro) in a two-step reaction: proline is first activated by ATP to form Pro-AMP and then transferred to the acceptor end of tRNA(Pro). This chain is Proline--tRNA ligase, found in Thermoplasma volcanium (strain ATCC 51530 / DSM 4299 / JCM 9571 / NBRC 15438 / GSS1).